A 300-amino-acid polypeptide reads, in one-letter code: PAK4-inhibitor INKA2 (300 aa).

Disordered regions lie at residues 59–104, 178–201, and 230–288; these read GGTP…SSPK, LEKG…GQSR, and KEKP…LEPS. Residues 60-73 are compositionally biased toward polar residues; the sequence is GTPTFSCPESSQEQ. The span at 93–102 shows a compositional bias: low complexity; it reads SSSQPSFDSS. The segment at 140-183 is inka box; it reads EPDDWTSTLMSRGRNRQPLVLGDNVFADLVGNWLDLPELEKGGE. The segment covering 246–256 has biased composition (basic residues); sequence GRSKKVKKRSL.

It belongs to the INKA family. Interacts with PAK4. Enriched in the nervous system.

Its subcellular location is the nucleus. Functionally, inhibitor of the serine/threonine-protein kinase PAK4. Acts by binding PAK4 in a substrate-like manner, inhibiting the protein kinase activity. This Mus musculus (Mouse) protein is PAK4-inhibitor INKA2.